A 484-amino-acid polypeptide reads, in one-letter code: Pentatricopeptide repeat-containing protein At1g09190 (484 aa).

10 PPR repeats span residues 66–100 (NVLV…GIWA), 101–135 (DEYT…GFHR), 136–166 (LGKI…MSER), 167–197 (NVVV…MSER), 198–232 (SIVS…GFDP), 233–267 (DEAT…GLFK), 269–299 (FITV…MQRR), 300–334 (NVVS…GKVA), 336–366 (NEAT…MMER), and 372–406 (RTEH…ANAA). Positions 407–482 (MWGSLLSACR…STGQSTICDV (76 aa)) are type E motif.

It belongs to the PPR family. PCMP-E subfamily.

This Arabidopsis thaliana (Mouse-ear cress) protein is Pentatricopeptide repeat-containing protein At1g09190 (PCMP-E70).